A 132-amino-acid chain; its full sequence is Small ribosomal subunit protein uS8 (132 aa).

This sequence belongs to the universal ribosomal protein uS8 family. Part of the 30S ribosomal subunit. Contacts proteins S5 and S12.

In terms of biological role, one of the primary rRNA binding proteins, it binds directly to 16S rRNA central domain where it helps coordinate assembly of the platform of the 30S subunit. This chain is Small ribosomal subunit protein uS8, found in Streptococcus thermophilus (strain CNRZ 1066).